A 680-amino-acid chain; its full sequence is Heterokaryon incompatibility protein 6, OR allele (680 aa).

In terms of biological role, involved in the non-self-recognition during asexual growth of N.crassa. This process involves restriction of heterokaryon formation via genetic differences at 11 het loci, including mating type. The polypeptide is Heterokaryon incompatibility protein 6, OR allele (het-6) (Neurospora crassa (strain ATCC 24698 / 74-OR23-1A / CBS 708.71 / DSM 1257 / FGSC 987)).